The following is a 207-amino-acid chain: High mobility group protein B2 (207 aa).

DNA-binding regions (HMG box) lie at residues 9–79 (PRGK…KNYV) and 95–163 (PKRP…AAYR). Cysteine 23 and cysteine 45 each carry cysteine sulfonic acid (-SO3H); alternate. A disulfide bridge connects residues cysteine 23 and cysteine 45. The span at 52 to 76 (MSSKEKGKFEEMAKGDKARYDREMK) shows a compositional bias: basic and acidic residues. The disordered stretch occupies residues 52–102 (MSSKEKGKFEEMAKGDKARYDREMKNYVPPKGEKKGKKKDPNAPKRPPSAF). At cysteine 106 the chain carries Cysteine sulfonic acid (-SO3H). The segment covering 162–172 (YRAKSKSDAGK) has biased composition (basic and acidic residues). The tract at residues 162–207 (YRAKSKSDAGKKGPGRPAGSKKKAEPEEEEEEEEDEEEEEEEEDEE) is disordered. The span at 187–207 (PEEEEEEEEDEEEEEEEEDEE) shows a compositional bias: acidic residues.

It belongs to the HMGB family. Post-translationally, reduction/oxidation of cysteine residues Cys-23, Cys-45 and Cys-106 and a possible intramolecular disulfide bond involving Cys-23 and Cys-45 give rise to different redox forms with specific functional activities in various cellular compartments: 1- fully reduced HMGB2 (HMGB2C23hC45hC106h), 2- disulfide HMGB2 (HMGB2C23-C45C106h) and 3- sulfonyl HMGB2 (HMGB2C23soC45soC106so).

Its subcellular location is the nucleus. It localises to the chromosome. The protein resides in the cytoplasm. It is found in the secreted. In terms of biological role, multifunctional protein with various roles in different cellular compartments. May act in a redox sensitive manner. Associates with chromatin and binds DNA with a preference to non-canonical DNA structures such as single-stranded DNA. Can bent DNA and enhance DNA flexibility by looping thus providing a mechanism to promote activities on various gene promoters. Proposed to be involved in the innate immune response to nucleic acids by acting as a cytoplasmic promiscuous immunogenic DNA/RNA sensor. Involved in inflammatory response to antigenic stimulus coupled with pro-inflammatory activity. This is High mobility group protein B2 (HMGB2) from Gallus gallus (Chicken).